The chain runs to 901 residues: HTH-type transcriptional regulator MalT (901 aa).

39 to 46 lines the ATP pocket; it reads SPAGYGKT. One can recognise an HTH luxR-type domain in the interval 829-894; sequence ELIRTSPLTQ…DAVQHAQQLL (66 aa). A DNA-binding region (H-T-H motif) is located at residues 853 to 872; it reads NEQIAGELDVAATTIKTHIR.

This sequence belongs to the MalT family. As to quaternary structure, monomer in solution. Oligomerizes to an active state in the presence of the positive effectors ATP and maltotriose.

With respect to regulation, activated by ATP and maltotriose, which are both required for DNA binding. Functionally, positively regulates the transcription of the maltose regulon whose gene products are responsible for uptake and catabolism of malto-oligosaccharides. Specifically binds to the promoter region of its target genes, recognizing a short DNA motif called the MalT box. The chain is HTH-type transcriptional regulator MalT from Klebsiella pneumoniae subsp. pneumoniae (strain ATCC 700721 / MGH 78578).